We begin with the raw amino-acid sequence, 441 residues long: Deoxyguanosinetriphosphate triphosphohydrolase-like protein (441 aa).

A disordered region spans residues 1–27 (MTSSVWQERRHGEDKQRRNDHRSPYQR). The span at 7 to 27 (QERRHGEDKQRRNDHRSPYQR) shows a compositional bias: basic and acidic residues. One can recognise an HD domain in the interval 59-252 (RLTHSLEVSQ…MELADDIAYA (194 aa)).

It belongs to the dGTPase family. Type 2 subfamily.

This Shewanella oneidensis (strain ATCC 700550 / JCM 31522 / CIP 106686 / LMG 19005 / NCIMB 14063 / MR-1) protein is Deoxyguanosinetriphosphate triphosphohydrolase-like protein.